The sequence spans 429 residues: Methanol:N,N-dimethyl-4-nitrosoaniline oxidoreductase (429 aa).

The protein belongs to the iron-containing alcohol dehydrogenase family. As to quaternary structure, homodecamer. Mg(2+) is required as a cofactor. Requires Zn(2+) as cofactor. It depends on NADPH as a cofactor.

The enzyme catalyses methanol + A = formaldehyde + AH2. With respect to regulation, inhibited by azide and hydrazine. Its function is as follows. Catalyzes the oxidation of methanol to yield formaldehyde. While the in vivo electron acceptor is not known, N,N-dimethyl-4-nitrosoaniline (NDMA) can serve this function in vitro and is reduced to 4-(hydroxylamino)-N,N-dimethylaniline. It can also use various other primary alcohols, polyols and formaldehyde. In addition, MNO is able to produce methylformate from methanol plus formaldehyde, and possesses a formaldehyde dismutase and a NADH-dependent formaldehyde reductase activity. The sequence is that of Methanol:N,N-dimethyl-4-nitrosoaniline oxidoreductase (mno) from Amycolatopsis methanolica.